We begin with the raw amino-acid sequence, 208 residues long: Large ribosomal subunit protein uL3 (208 aa).

Glutamine 149 carries the N5-methylglutamine modification.

Belongs to the universal ribosomal protein uL3 family. As to quaternary structure, part of the 50S ribosomal subunit. Forms a cluster with proteins L14 and L19. In terms of processing, methylated by PrmB.

One of the primary rRNA binding proteins, it binds directly near the 3'-end of the 23S rRNA, where it nucleates assembly of the 50S subunit. This chain is Large ribosomal subunit protein uL3, found in Mannheimia succiniciproducens (strain KCTC 0769BP / MBEL55E).